The primary structure comprises 645 residues: MSEAEYLKAVEMLNIWAKAYYTQDNPLATDIEYDVLYKKVETFENEFPDLKVSYSPTNRVGDAVSEGFEKINHKAKMWSMEDIFDDNELLAWLERGEKAGLEFFVEPKFDGASLNLTYENGVLISAGTRGNGETGENVTQNVKVINSIPLQIDYKEKIEIRGEVVIAKSDFDALNDERANSGENLFANPRNAAAGSLRQLDSAVVKSRHLKFFPWDVGENSLNFKKHSEIMEFVRNLGFLKDDFVRVCASLTDLRKAYVDLHEMRERKDILMDGMVIRINELTKCENMGYTIKFPRFMVAYKFPPVEKATKLIDINLQVGRTGVITPVGVLEPVNIDGATVRNATLHNFDEIARLGLMKGDIVSIIRSGDVIPKITGVFGARRNGSETPIKRPEFCPVCGSRLLVEDIFIRCQNLTCKARIVNSLIYFCSKKCMNIDGLGEAIINTLFEKGKIINISDIYTLKADDLEGLEGFKDKKISNLLASIENSRISPLYRFITALGIEHIGEVAARKIAEIFGENWLNASFDEILKIDGFGEAMAKSFVGFCEINREKIENLLSFLHLSAQKTEISQNVFTKKTVVITGTLSISRDEMKEKLIKMGANVTNSVSKKTDFVLFGKDAGSKLEKAKMLGVKAISEDEFKEML.

NAD(+) is bound by residues 30 to 34 (DIEYD), 79 to 80 (SM), and Glu106. Catalysis depends on Lys108, which acts as the N6-AMP-lysine intermediate. The NAD(+) site is built by Arg129, Glu163, and Lys302. Residues Cys396, Cys399, Cys412, and Cys417 each coordinate Zn(2+). Residues 570–645 (ISQNVFTKKT…ISEDEFKEML (76 aa)) form the BRCT domain.

Belongs to the NAD-dependent DNA ligase family. LigA subfamily. Mg(2+) is required as a cofactor. It depends on Mn(2+) as a cofactor.

It catalyses the reaction NAD(+) + (deoxyribonucleotide)n-3'-hydroxyl + 5'-phospho-(deoxyribonucleotide)m = (deoxyribonucleotide)n+m + AMP + beta-nicotinamide D-nucleotide.. In terms of biological role, DNA ligase that catalyzes the formation of phosphodiester linkages between 5'-phosphoryl and 3'-hydroxyl groups in double-stranded DNA using NAD as a coenzyme and as the energy source for the reaction. It is essential for DNA replication and repair of damaged DNA. The protein is DNA ligase of Campylobacter hominis (strain ATCC BAA-381 / DSM 21671 / CCUG 45161 / LMG 19568 / NCTC 13146 / CH001A).